A 426-amino-acid polypeptide reads, in one-letter code: L-ascorbate peroxidase T, chloroplastic (426 aa).

Residue His112 is the Proton acceptor of the active site. His241 is a heme b binding site. Residue Thr242 participates in K(+) binding. A disordered region spans residues 245-269; it reads RARPDRSGWGKPETKYTKTGPGEAG. Residues 246–260 show a composition bias toward basic and acidic residues; it reads ARPDRSGWGKPETKY. Residues Thr274 and Asp281 each contribute to the K(+) site. Residues 397-417 traverse the membrane as a helical segment; that stretch reads YFLNIIIAIGVLVLLSTLFGG.

The protein belongs to the peroxidase family. Ascorbate peroxidase subfamily. The cofactor is heme b.

It localises to the plastid. Its subcellular location is the chloroplast thylakoid membrane. The enzyme catalyses L-ascorbate + H2O2 = L-dehydroascorbate + 2 H2O. Functionally, plays a key role in hydrogen peroxide removal. The protein is L-ascorbate peroxidase T, chloroplastic (APXT) of Arabidopsis thaliana (Mouse-ear cress).